The chain runs to 152 residues: MIYYVIALFVIAIDQISKWLIVKNMELGTSIPIIDNVLYITSHRNRGAAWGILENKMWFFYIITVVFVAFIVFYMKKYAKTDKLLGISLGLILGGAIGNFIDRVFRQEVVDFIHVYIFSYNYPVFNIADSALCIGVVLIIIQTLLEGKKTKE.

The next 2 helical transmembrane spans lie at 55–75 (NKMW…VFYM) and 85–105 (LGIS…DRVF). Active-site residues include aspartate 111 and aspartate 129. The chain crosses the membrane as a helical span at residues 124–144 (VFNIADSALCIGVVLIIIQTL).

This sequence belongs to the peptidase A8 family.

The protein resides in the cell membrane. It catalyses the reaction Release of signal peptides from bacterial membrane prolipoproteins. Hydrolyzes -Xaa-Yaa-Zaa-|-(S,diacylglyceryl)Cys-, in which Xaa is hydrophobic (preferably Leu), and Yaa (Ala or Ser) and Zaa (Gly or Ala) have small, neutral side chains.. It functions in the pathway protein modification; lipoprotein biosynthesis (signal peptide cleavage). Its function is as follows. This protein specifically catalyzes the removal of signal peptides from prolipoproteins. The polypeptide is Lipoprotein signal peptidase (Bacillus cereus (strain AH187)).